Consider the following 167-residue polypeptide: MEKIIEKSIYASRWLMFPVYVGLSFGFILLTLKFFQQIIFIIPDILAMSESGLVLAVLSLIDIALVGGLLVMVMFSGYENFISKMDIQDNEKRLGWMGTMDVNSIKNKVASSIVAISSVHLLRLFMEAERILDNKIMLCVIIRLTFVLSAFGMAYIDKMSKKKDNLH.

The next 3 helical transmembrane spans lie at 15–35 (LMFPVYVGLSFGFILLTLKFF), 53–73 (LVLAVLSLIDIALVGGLLVMV), and 136–156 (IMLCVIIRLTFVLSAFGMAYI).

It belongs to the UPF0114 family.

The protein localises to the cell membrane. This chain is UPF0114 protein in repA1-repA2 intergenic region, found in Buchnera aphidicola subsp. Schizaphis graminum (strain Sg).